A 408-amino-acid chain; its full sequence is Acetate kinase (408 aa).

Residue Asn-7 participates in Mg(2+) binding. Position 14 (Lys-14) interacts with ATP. Arg-91 provides a ligand contact to substrate. The active-site Proton donor/acceptor is Asp-148. ATP-binding positions include 208–212, 283–285, and 331–335; these read HLGNG, DFR, and GIGEN. Position 384 (Glu-384) interacts with Mg(2+).

The protein belongs to the acetokinase family. As to quaternary structure, homodimer. Mg(2+) is required as a cofactor. Mn(2+) serves as cofactor.

The protein localises to the cytoplasm. The catalysed reaction is acetate + ATP = acetyl phosphate + ADP. The protein operates within metabolic intermediate biosynthesis; acetyl-CoA biosynthesis; acetyl-CoA from acetate: step 1/2. Functionally, catalyzes the formation of acetyl phosphate from acetate and ATP. Can also catalyze the reverse reaction. The sequence is that of Acetate kinase from Methanosarcina barkeri (strain Fusaro / DSM 804).